A 1152-amino-acid polypeptide reads, in one-letter code: Receptor-type guanylate cyclase gcy-8 (1152 aa).

An N-terminal signal peptide occupies residues 1-21 (MRTKKAFLLLTFNVLIYLAAC). Residues 22–506 (QETERILANN…GYRNERCDYT (485 aa)) lie on the Extracellular side of the membrane. N-linked (GlcNAc...) asparagine glycans are attached at residues N31, N55, N385, and N465. A helical transmembrane segment spans residues 507-527 (LIIIGAALILLFIVAAVSAFF). The Cytoplasmic portion of the chain corresponds to 528–1152 (AQKILEKRAL…NLKNPTGLQR (625 aa)). A Protein kinase domain is found at 567–857 (RTKMSNMNYG…RIKLNVETYL (291 aa)). Residues 573–581 (MNYGSRNHA) and K593 each bind ATP. A coiled-coil region spans residues 861-899 (GSLVDQMTRMMEQYANNLEKLVAERTGMLEEANQRADRL). The region spanning 927–1057 (TVLFSDIVGF…DTVNMASRME (131 aa)) is the Guanylate cyclase domain. Mg(2+) contacts are provided by D932, I933, and D976.

This sequence belongs to the adenylyl cyclase class-4/guanylyl cyclase family. In terms of tissue distribution, expressed bilaterally in AFD sensory neurons.

Its subcellular location is the cell membrane. The protein localises to the cell projection. It localises to the cilium. The catalysed reaction is GTP = 3',5'-cyclic GMP + diphosphate. With respect to regulation, inhibited by chloride with an IC(50) of 60 mM. In terms of biological role, guanylate cyclase involved in the production of the second messenger cGMP. Regulates thermotaxis responses in AFD sensory neurons. May regulate AFD neuronal activity such as calcium responses to temperature gradients. Maintains the microvilli receptive ending morphology of the AFD thermosensory neurons by regulating cGMP levels downstream of kcc-3. cGMP levels antagonize the actin cytoskeleton regulator wsp-1. This chain is Receptor-type guanylate cyclase gcy-8, found in Caenorhabditis elegans.